Consider the following 144-residue polypeptide: Large ribosomal subunit protein uL15 (144 aa).

Residues 1–59 (MRLNTISPAEGSKPTGKRSGRGIGSGLGKTGGVGHKGQKSRSGGRVKPGFEGGQMPIQR) are disordered. Over residues 21–35 (RGIGSGLGKTGGVGH) the composition is skewed to gly residues.

The protein belongs to the universal ribosomal protein uL15 family. As to quaternary structure, part of the 50S ribosomal subunit.

Binds to the 23S rRNA. The sequence is that of Large ribosomal subunit protein uL15 from Alteromonas mediterranea (strain DSM 17117 / CIP 110805 / LMG 28347 / Deep ecotype).